A 384-amino-acid chain; its full sequence is S-adenosylmethionine synthase (384 aa).

Histidine 15 is an ATP binding site. Aspartate 17 lines the Mg(2+) pocket. Glutamate 43 contributes to the K(+) binding site. L-methionine contacts are provided by glutamate 56 and glutamine 99. The flexible loop stretch occupies residues 99–109 (QSPDINQGVDR). ATP contacts are provided by residues 164-166 (DAK), 231-232 (RF), aspartate 240, 246-247 (RK), alanine 263, and lysine 267. Aspartate 240 provides a ligand contact to L-methionine. An L-methionine-binding site is contributed by lysine 271.

Belongs to the AdoMet synthase family. In terms of assembly, homotetramer; dimer of dimers. The cofactor is Mg(2+). It depends on K(+) as a cofactor.

It localises to the cytoplasm. The enzyme catalyses L-methionine + ATP + H2O = S-adenosyl-L-methionine + phosphate + diphosphate. Its pathway is amino-acid biosynthesis; S-adenosyl-L-methionine biosynthesis; S-adenosyl-L-methionine from L-methionine: step 1/1. In terms of biological role, catalyzes the formation of S-adenosylmethionine (AdoMet) from methionine and ATP. The overall synthetic reaction is composed of two sequential steps, AdoMet formation and the subsequent tripolyphosphate hydrolysis which occurs prior to release of AdoMet from the enzyme. This Shewanella halifaxensis (strain HAW-EB4) protein is S-adenosylmethionine synthase.